The sequence spans 565 residues: MARPKNVKHIFVTGGVISSLGKGILSASLGMLLKSRGLRVAIQKYDPYINVDPGTMSPYQHGEVYVTDDGAETDLDLGHYERFLDEPTSQASNLTMGRVYKSVIDKERRGEYLGGTVQVVPHVIDEIKEKMNDLAKNGSLDVLITEIGGTIGDIESLPFLEAMRQLKLELGDRNVLNIHLTFVPYIKAASELKTKPTQHSVKMLLETGIQPDILVCRSEKPLSREIKNKVGHFCNVHEQDVIGLNDCETIYAVPLMLLREQLDLRVMKKLGLKKFREPNLEHWKRFCEKVTNPKDGEITIGVCGKYTEYPDAYKSIIEAFIHAGASNDVKVSVKMLRAEDAEDSSFNMNKAFEGVSGLLVAPGFGDRGIEGKVQFVQYARENNIPFFGICLGMQCASIEFARNVCDLPDANSTEFNKRARFPVIDLMEQQKKVKEKGGTMRLGSYPCILKEGSKVHEVYGKFLINERHRHRYEFNNQFRKLFEEKGMIFSGTSPNGELVEIIELKEHRWFVAVQFHPELKSRVQKVHPLFDGFVQAAKEFAMGKRQLTLEDELPRLSSEEMEGAG.

The interval 1-272 is amidoligase domain; it reads MARPKNVKHI…DLRVMKKLGL (272 aa). A CTP-binding site is contributed by Ser-18. UTP is bound at residue Ser-18. ATP is bound at residue 19–24; the sequence is SLGKGI. Tyr-59 is a binding site for L-glutamine. Residue Asp-76 coordinates ATP. Mg(2+) is bound by residues Asp-76 and Glu-146. Residues 153-155, 193-198, and Lys-229 each bind CTP; these read DIE and KTKPTQ. UTP contacts are provided by residues 193-198 and Lys-229; that span reads KTKPTQ. Positions 299 to 543 constitute a Glutamine amidotransferase type-1 domain; the sequence is TIGVCGKYTE…VQAAKEFAMG (245 aa). Gly-363 lines the L-glutamine pocket. Cys-390 (nucleophile; for glutamine hydrolysis) is an active-site residue. Residues 391 to 394, Glu-414, and Arg-471 each bind L-glutamine; that span reads LGMQ. Active-site residues include His-516 and Glu-518.

The protein belongs to the CTP synthase family. In terms of assembly, homotetramer.

The enzyme catalyses UTP + L-glutamine + ATP + H2O = CTP + L-glutamate + ADP + phosphate + 2 H(+). It catalyses the reaction L-glutamine + H2O = L-glutamate + NH4(+). It carries out the reaction UTP + NH4(+) + ATP = CTP + ADP + phosphate + 2 H(+). It functions in the pathway pyrimidine metabolism; CTP biosynthesis via de novo pathway; CTP from UDP: step 2/2. Allosterically activated by GTP, when glutamine is the substrate; GTP has no effect on the reaction when ammonia is the substrate. The allosteric effector GTP functions by stabilizing the protein conformation that binds the tetrahedral intermediate(s) formed during glutamine hydrolysis. Inhibited by the product CTP, via allosteric rather than competitive inhibition. Catalyzes the ATP-dependent amination of UTP to CTP with either L-glutamine or ammonia as the source of nitrogen. Regulates intracellular CTP levels through interactions with the four ribonucleotide triphosphates. The polypeptide is CTP synthase (Chlorobaculum parvum (strain DSM 263 / NCIMB 8327) (Chlorobium vibrioforme subsp. thiosulfatophilum)).